The sequence spans 187 residues: ATP synthase subunit b, chloroplastic (187 aa).

A helical transmembrane segment spans residues 29-49; it reads LAVVLGVLIYLGKGVCAGCIL.

It belongs to the ATPase B chain family. In terms of assembly, F-type ATPases have 2 components, F(1) - the catalytic core - and F(0) - the membrane proton channel. F(1) has five subunits: alpha(3), beta(3), gamma(1), delta(1), epsilon(1). F(0) has four main subunits: a(1), b(1), b'(1) and c(10-14). The alpha and beta chains form an alternating ring which encloses part of the gamma chain. F(1) is attached to F(0) by a central stalk formed by the gamma and epsilon chains, while a peripheral stalk is formed by the delta, b and b' chains.

It is found in the plastid. The protein resides in the chloroplast thylakoid membrane. Its function is as follows. F(1)F(0) ATP synthase produces ATP from ADP in the presence of a proton or sodium gradient. F-type ATPases consist of two structural domains, F(1) containing the extramembraneous catalytic core and F(0) containing the membrane proton channel, linked together by a central stalk and a peripheral stalk. During catalysis, ATP synthesis in the catalytic domain of F(1) is coupled via a rotary mechanism of the central stalk subunits to proton translocation. In terms of biological role, component of the F(0) channel, it forms part of the peripheral stalk, linking F(1) to F(0). This is ATP synthase subunit b, chloroplastic from Angiopteris evecta (Mule's foot fern).